The following is a 140-amino-acid chain: MSALQELSGITGKYDSSVVDHFENPRNVGSLDKTDPRVGTGMVGAPACGDVMKLQIKVGKDNVIEDAKFKTFGCGSAIASSSLATEWIKKKTIDESLKISNRDIAKKLSLPPIKLHCSMLAEDAIKMAIKDFLDKNKPSP.

The protein belongs to the NifU family. Component of the core Fe-S cluster (ISC) assembly machinery. [2Fe-2S] cluster is required as a cofactor.

It localises to the mitosome matrix. The protein operates within cofactor biosynthesis; iron-sulfur cluster biosynthesis. Functionally, scaffold protein for the de novo synthesis of iron-sulfur (Fe-S) clusters within mitosomes, which is required for maturation of both [2Fe-2S] and [4Fe-4S] proteins. First, a [2Fe-2S] cluster is transiently assembled on the scaffold protein ISU1. In a second step, the cluster is released from ISU1, transferred to a glutaredoxin, followed by the formation of [2Fe-2S] proteins, the synthesis of [4Fe-4S] clusters and their target-specific insertion into the recipient apoproteins. Cluster assembly on ISU1 depends on the function of the cysteine desulfurase complex NFS1-ISD11, which serves as the sulfur donor for cluster synthesis, the iron-binding protein frataxin as the putative iron donor, and the electron transfer chain comprised of ferredoxin reductase and ferredoxin, which receive their electrons from NADH. The polypeptide is Iron sulfur cluster assembly protein 1 (ISU1) (Encephalitozoon cuniculi (strain GB-M1) (Microsporidian parasite)).